We begin with the raw amino-acid sequence, 60 residues long: Large ribosomal subunit protein bL32 (60 aa).

A compositionally biased stretch (basic residues) spans 1–16; it reads MAVPRRKTSPSRRGMR. Positions 1 to 60 are disordered; the sequence is MAVPRRKTSPSRRGMRRSADAIKKPTYVEDKDSGELRRPHHLDLKTGMYKGRQVLKKKES. A compositionally biased stretch (basic and acidic residues) spans 17–44; sequence RSADAIKKPTYVEDKDSGELRRPHHLDL.

It belongs to the bacterial ribosomal protein bL32 family.

The polypeptide is Large ribosomal subunit protein bL32 (Bradyrhizobium diazoefficiens (strain JCM 10833 / BCRC 13528 / IAM 13628 / NBRC 14792 / USDA 110)).